The sequence spans 502 residues: Glutamate decarboxylase (502 aa).

N6-(pyridoxal phosphate)lysine is present on Lys278. The tract at residues 471-502 is calmodulin-binding; sequence GLHHFHMDTVETQKDIIKHWRKIAGKKTSGVC.

The protein belongs to the group II decarboxylase family. It depends on pyridoxal 5'-phosphate as a cofactor.

It catalyses the reaction L-glutamate + H(+) = 4-aminobutanoate + CO2. In terms of biological role, catalyzes the production of GABA. The calmodulin-binding is calcium-dependent and it is proposed that this may, directly or indirectly, form a calcium regulated control of GABA biosynthesis. The sequence is that of Glutamate decarboxylase from Solanum lycopersicum (Tomato).